The following is a 688-amino-acid chain: UvrABC system protein B (688 aa).

Residues 31–188 (GRVNAGEPDV…RKFVSMQYQR (158 aa)) enclose the Helicase ATP-binding domain. 44–51 (GATGTGKS) provides a ligand contact to ATP. The short motif at 97–120 (YYDYYQPEAYVPQTDTFIEKDSSV) is the Beta-hairpin element. The 154-residue stretch at 434–587 (QIDDLLEQIR…QVAYNTEHGI (154 aa)) folds into the Helicase C-terminal domain. The tract at residues 607–632 (GEDTKKMLEGRGGGKRSPTPNLRREG) is disordered. Residues 642-677 (ETIISDLNDQMLQAAGELKFELAARLRDELGDLKRE) form the UVR domain.

This sequence belongs to the UvrB family. As to quaternary structure, forms a heterotetramer with UvrA during the search for lesions. Interacts with UvrC in an incision complex.

The protein localises to the cytoplasm. In terms of biological role, the UvrABC repair system catalyzes the recognition and processing of DNA lesions. A damage recognition complex composed of 2 UvrA and 2 UvrB subunits scans DNA for abnormalities. Upon binding of the UvrA(2)B(2) complex to a putative damaged site, the DNA wraps around one UvrB monomer. DNA wrap is dependent on ATP binding by UvrB and probably causes local melting of the DNA helix, facilitating insertion of UvrB beta-hairpin between the DNA strands. Then UvrB probes one DNA strand for the presence of a lesion. If a lesion is found the UvrA subunits dissociate and the UvrB-DNA preincision complex is formed. This complex is subsequently bound by UvrC and the second UvrB is released. If no lesion is found, the DNA wraps around the other UvrB subunit that will check the other stand for damage. This is UvrABC system protein B from Clavibacter michiganensis subsp. michiganensis (strain NCPPB 382).